The following is a 203-amino-acid chain: Outer-membrane lipoprotein carrier protein (203 aa).

A signal peptide spans 1–21; it reads MKKQLMTSCLFAAVLAAPAFA.

This sequence belongs to the LolA family. As to quaternary structure, monomer.

It localises to the periplasm. In terms of biological role, participates in the translocation of lipoproteins from the inner membrane to the outer membrane. Only forms a complex with a lipoprotein if the residue after the N-terminal Cys is not an aspartate (The Asp acts as a targeting signal to indicate that the lipoprotein should stay in the inner membrane). The protein is Outer-membrane lipoprotein carrier protein of Sodalis glossinidius (strain morsitans).